The primary structure comprises 99 residues: ATP synthase subunit c (99 aa).

2 helical membrane-spanning segments follow: residues 23-43 (GAGI…IGAL) and 78-98 (MGIA…LIFV).

It belongs to the ATPase C chain family. As to quaternary structure, F-type ATPases have 2 components, F(1) - the catalytic core - and F(0) - the membrane proton channel. F(1) has five subunits: alpha(3), beta(3), gamma(1), delta(1), epsilon(1). F(0) has three main subunits: a(1), b(2) and c(10-14). The alpha and beta chains form an alternating ring which encloses part of the gamma chain. F(1) is attached to F(0) by a central stalk formed by the gamma and epsilon chains, while a peripheral stalk is formed by the delta and b chains.

It is found in the cell membrane. Functionally, f(1)F(0) ATP synthase produces ATP from ADP in the presence of a proton or sodium gradient. F-type ATPases consist of two structural domains, F(1) containing the extramembraneous catalytic core and F(0) containing the membrane proton channel, linked together by a central stalk and a peripheral stalk. During catalysis, ATP synthesis in the catalytic domain of F(1) is coupled via a rotary mechanism of the central stalk subunits to proton translocation. Key component of the F(0) channel; it plays a direct role in translocation across the membrane. A homomeric c-ring of between 10-14 subunits forms the central stalk rotor element with the F(1) delta and epsilon subunits. The protein is ATP synthase subunit c of Mycoplasma mobile (strain ATCC 43663 / 163K / NCTC 11711) (Mesomycoplasma mobile).